Consider the following 957-residue polypeptide: Glycine dehydrogenase (decarboxylating) (957 aa).

An N6-(pyridoxal phosphate)lysine modification is found at lysine 702.

This sequence belongs to the GcvP family. In terms of assembly, the glycine cleavage system is composed of four proteins: P, T, L and H. The cofactor is pyridoxal 5'-phosphate.

The catalysed reaction is N(6)-[(R)-lipoyl]-L-lysyl-[glycine-cleavage complex H protein] + glycine + H(+) = N(6)-[(R)-S(8)-aminomethyldihydrolipoyl]-L-lysyl-[glycine-cleavage complex H protein] + CO2. Functionally, the glycine cleavage system catalyzes the degradation of glycine. The P protein binds the alpha-amino group of glycine through its pyridoxal phosphate cofactor; CO(2) is released and the remaining methylamine moiety is then transferred to the lipoamide cofactor of the H protein. In Bradyrhizobium sp. (strain ORS 278), this protein is Glycine dehydrogenase (decarboxylating).